Consider the following 488-residue polypeptide: Erythromycin resistance ATP-binding protein MsrA (488 aa).

One can recognise an ABC transporter 1 domain in the interval 6 to 199 (IKFNQINHKL…NQYEQEQLEQ (194 aa)). 38-45 (GGNGTGKT) contacts ATP. A Q-linker, rich in Glu and hydrophilic AA region spans residues 200 to 298 (QRKYEQYISE…KIYDIHNNYP (99 aa)). The disordered stretch occupies residues 211 to 255 (QRLSQASKAKRNQAQQMAQASSKQKNKSIAPDRLSASKEKGTVEK). Residues 222–233 (NQAQQMAQASSK) are compositionally biased toward low complexity. Over residues 245 to 255 (SASKEKGTVEK) the composition is skewed to basic and acidic residues. The ABC transporter 2 domain maps to 299-487 (IIAQNLTLVK…ELTGQSIHDI (189 aa)). 331-338 (GANGVGKT) provides a ligand contact to ATP.

This sequence belongs to the ABC transporter superfamily.

In terms of biological role, confers resistance to 14-membered ring macrolides (like erythromycin) and to B streptogramins, by acting as an ATP-dependent efflux pump. In Staphylococcus epidermidis, this protein is Erythromycin resistance ATP-binding protein MsrA (msrA).